A 177-amino-acid polypeptide reads, in one-letter code: Large ribosomal subunit protein uL6 (177 aa).

The protein belongs to the universal ribosomal protein uL6 family. As to quaternary structure, part of the 50S ribosomal subunit.

In terms of biological role, this protein binds to the 23S rRNA, and is important in its secondary structure. It is located near the subunit interface in the base of the L7/L12 stalk, and near the tRNA binding site of the peptidyltransferase center. This Variovorax paradoxus (strain S110) protein is Large ribosomal subunit protein uL6.